The sequence spans 118 residues: Hisactophilin-1 (118 aa).

G2 is lipidated: N-myristoyl glycine. The contains several HHXH repeats stretch occupies residues 8-109 (SHHGHFLSAE…HVSTKEHHDH (102 aa)). 2 consecutive repeat copies span residues 34 to 46 (FHVE…VALK) and 74 to 86 (FHLE…VSIK). The segment at 34–86 (FHVENHGGKVALKTHCGKYLSIGDHKQVYLSHHLHGDHSLFHLEHHGGKVSIK) is 2 X 13 AA approximate repeats.

This sequence belongs to the hisactophilin family. Homodimer or heterodimer of hatA and hatB, linked by a disulfide bond. Phosphorylated.

Its subcellular location is the cytoplasm. It is found in the cell membrane. In terms of biological role, may act as an intracellular pH sensor that links chemotactic signals to responses in the microfilament system of the cells by nucleating actin polymerization or stabilizing the filaments. The protein is Hisactophilin-1 (hatA) of Dictyostelium discoideum (Social amoeba).